A 113-amino-acid chain; its full sequence is Translation initiation factor IF-1, chloroplastic (113 aa).

The 76-residue stretch at 8 to 83 folds into the S1-like domain; that stretch reads REKKNPREAK…SKGRIIYRLP (76 aa). The segment at 86–113 is disordered; the sequence is DSKRIEDSKDSEDLKDSEDLKDTKDSKD.

The protein belongs to the IF-1 family. In terms of assembly, component of the 30S ribosomal translation pre-initiation complex which assembles on the 30S ribosome in the order IF-2 and IF-3, IF-1 and N-formylmethionyl-tRNA(fMet); mRNA recruitment can occur at any time during PIC assembly.

The protein localises to the plastid. Its subcellular location is the chloroplast. Its function is as follows. One of the essential components for the initiation of protein synthesis. Stabilizes the binding of IF-2 and IF-3 on the 30S subunit to which N-formylmethionyl-tRNA(fMet) subsequently binds. Helps modulate mRNA selection, yielding the 30S pre-initiation complex (PIC). Upon addition of the 50S ribosomal subunit IF-1, IF-2 and IF-3 are released leaving the mature 70S translation initiation complex. In Hordeum vulgare (Barley), this protein is Translation initiation factor IF-1, chloroplastic.